Here is a 296-residue protein sequence, read N- to C-terminus: Thioredoxin-related transmembrane protein 2 (296 aa).

Positions 1-48 (MAVLAPLIALVYSVPRLSRWLARPYYFLSALLSAAFLLVRKLPPVCES) are cleaved as a signal peptide. Over 49 to 102 (LPTQREDGNPCDFDWREVEILMFLSAIVMMKNRRSITVEQHVGNIFMFSKVANA) the chain is Extracellular. The helical transmembrane segment at 103–125 (ILFFRLDIRMGLLYITLCIVFLM) threads the bilayer. The Cytoplasmic portion of the chain corresponds to 126–296 (TCKPPLYMGP…VPDEESKKDK (171 aa)). The Thioredoxin domain occupies 132 to 269 (YMGPEYIKYF…LYQRAKKLSK (138 aa)). Residues S211 and S243 each carry the phosphoserine modification. Positions 272–296 (DKIPEEQPVAAVPAAVPDEESKKDK) are disordered. The span at 277–287 (EQPVAAVPAAV) shows a compositional bias: low complexity. The short motif at 293–296 (KKDK) is the Di-lysine motif element.

In terms of assembly, monomer. Homodimer; disulfide-linked. Occurs in both reduced and oxidized monomeric form. Oxidative conditions increase homodimerization. Interacts with CANX. Interacts with ATP2A2.

Its subcellular location is the endoplasmic reticulum membrane. The protein resides in the mitochondrion membrane. Endoplasmic reticulum and mitochondria-associated protein that probably functions as a regulator of cellular redox state and thereby regulates protein post-translational modification, protein folding and mitochondrial activity. Indirectly regulates neuronal proliferation, migration, and organization in the developing brain. The chain is Thioredoxin-related transmembrane protein 2 (TMX2) from Bos taurus (Bovine).